A 1161-amino-acid polypeptide reads, in one-letter code: Nuclear receptor-interacting protein 1 (1161 aa).

The interaction with ZNF366 stretch occupies residues 1 to 416 (MTHGEELGSD…FESSTPTTID (416 aa)). Positions 21-25 (LEGLL) match the LXXLL motif 1 motif. The disordered stretch occupies residues 34–68 (GTAINKKSAGHKEEDQNFNLSGSAFPSCQSNGPTV). Positions 50-68 (NFNLSGSAFPSCQSNGPTV) are enriched in polar residues. Residues 78 to 335 (MLHLKKARLL…LNGQARALPA (258 aa)) are repression domain 1. Phosphoserine is present on Ser-104. An N6-acetyllysine; alternate modification is found at Lys-111. A Glycyl lysine isopeptide (Lys-Gly) (interchain with G-Cter in SUMO2); alternate cross-link involves residue Lys-111. The short motif at 133 to 137 (LASLL) is the LXXLL motif 2 element. Lys-158 carries the post-translational modification N6-acetyllysine. A Glycyl lysine isopeptide (Lys-Gly) (interchain with G-Cter in SUMO2) cross-link involves residue Lys-170. An LXXLL motif 3 motif is present at residues 185 to 189 (LKTLL). Residues Lys-195 and Lys-198 each participate in a glycyl lysine isopeptide (Lys-Gly) (interchain with G-Cter in SUMO2) cross-link. Position 207 is a phosphothreonine (Thr-207). Ser-218 carries the phosphoserine modification. The LXXLL motif 4 signature appears at 267–271 (LALLL). An N6-acetyllysine mark is found at Lys-287 and Lys-311. Position 358 is a phosphoserine (Ser-358). Lys-374 is covalently cross-linked (Glycyl lysine isopeptide (Lys-Gly) (interchain with G-Cter in SUMO2)). Ser-380 carries the phosphoserine modification. Residues 382–386 (LLHLL) carry the LXXLL motif 5 motif. The disordered stretch occupies residues 393-436 (TPMNGHSQNERASSFESSTPTTIDEYSDNNPSFTDDSSGDESSY). The interval 411–701 (TPTTIDEYSD…PAGPEPGLPG (291 aa)) is repression domain 2. The segment at 432 to 473 (DESSYSNCVPIDLSCKHRIEKPEAERPVSLENLTQSLLNTWD) is required for targeting to small nuclear foci. The CTBP-binding; principal site signature appears at 441–447 (PIDLSCK). Lys-447 and Lys-482 each carry N6-acetyllysine. Ser-488 is modified (phosphoserine). An LXXLL motif 6 motif is present at residues 501–505 (LLQLL). Lys-509 participates in a covalent cross-link: Glycyl lysine isopeptide (Lys-Gly) (interchain with G-Cter in SUMO2). Over residues 517-552 (NASPQDIHSDGTKFSPQNYTRTSVIESPSTNRTTPV) the composition is skewed to polar residues. Residues 517-559 (NASPQDIHSDGTKFSPQNYTRTSVIESPSTNRTTPVSTPPLYT) form a disordered region. At Ser-519 the chain carries Phosphoserine. N6-acetyllysine is present on Lys-529. A phosphoserine mark is found at Ser-531, Ser-543, and Ser-565. Positions 566–570 (PINLS) match the CTBP-binding motif. Disordered stretches follow at residues 604 to 623 (TKGK…AQNS), 639 to 702 (GLQS…LPGC), and 717 to 747 (LLGN…ERAA). Residue Lys-607 is modified to N6-acetyllysine. Residue Ser-672 is modified to Phosphoserine. An LXXLL motif 7 motif is present at residues 714–718 (LQLLL). The segment covering 724-747 (GKNEKKEKTPARDEAPQEHSERAA) has biased composition (basic and acidic residues). The segment at 736-886 (DEAPQEHSER…TAVDTANHHS (151 aa)) is repression domain 3. Residues 754–1161 (VKIKSEPCDD…NALTIKKESE (408 aa)) form an interaction with ZNF366 region. Residues Lys-757 and Lys-803 each participate in a glycyl lysine isopeptide (Lys-Gly) (interchain with G-Cter in SUMO2) cross-link. At Ser-808 the chain carries Phosphoserine. The LXXLL motif 8 signature appears at 820–824 (LSRLL). A disordered region spans residues 829-848 (ESYPADEQDKSHRNSELPTL). Glycyl lysine isopeptide (Lys-Gly) (interchain with G-Cter in SUMO2) cross-links involve residues Lys-851 and Lys-902. Position 932 is an N6-acetyllysine; alternate (Lys-932). Residue Lys-932 forms a Glycyl lysine isopeptide (Lys-Gly) (interchain with G-Cter in SUMO2); alternate linkage. Positions 937–941 (LKQLL) match the LXXLL motif 9 motif. Residues 947–951 (VRDLS) carry the CTBP-binding motif. Over residues 950-962 (LSPHRSDSVPDTK) the composition is skewed to basic and acidic residues. The disordered stretch occupies residues 950 to 976 (LSPHRSDSVPDTKKKGHKNNAPGSKPE). Residue Ser-1003 is modified to Phosphoserine. The interval 1063-1076 (LTKTNPILYYMLQK) is ligand-dependent nuclear receptor binding. Residues Lys-1108, Lys-1118, and Lys-1157 each participate in a glycyl lysine isopeptide (Lys-Gly) (interchain with G-Cter in SUMO2) cross-link. The interval 1121–1161 (FFNLRSPYNSHMGNNASRPHSTNGEVYGLLGNALTIKKESE) is repression domain 4.

Interacts with CTBP1, CTBP2, ERS1, HDAC1, HDAC2, HDAC5, HDAC6, NR2C2, NR3C1, NR3C2, YWHAH, JUN and FOS. Found in a complex with both NR3C1 and YWHAH. Interacts with NR2C1 (sumoylated form and via the ligand-binding domain); the interaction results in promoting the repressor activity of NR2C1. Interacts with RARA and RXRB homodimers and RARA/RXRB heterodimers in the presence of ligand. Interacts with HDAC1 and HDAC3 via its N-terminal domain. Interacts with ZNF366. Interacts with RORA. Acetylation abolishes interaction with CTBP1. Phosphorylation enhances interaction with YWHAH. Acetylation regulates its nuclear translocation and corepressive activity. Expressed in the embryonic placenta. In the adult, expression is strong in the testis and brain. Also expressed at a high level in the white adipose tissue. Expressed constantly but at a weaker level in the adult heart, lung, stomach and kidney. Expressed moderately in the skeletal muscle. Expressed at a low level in the adult spleen, liver and brown adipose tissue. Expressed in the ovary at a high level in granulosa cells and at a lower level in the thecal and interstitial compartments.

The protein localises to the nucleus. In terms of biological role, modulates transcriptional repression by nuclear hormone receptors such as NR2C1, thyroid hormone receptor and retinoic acid receptor/RARA. Essential for cumulus expansion and follicle rupture during ovulation. Also controls the balance between fat accumulation and energy expenditure. Positive regulator of the circadian clock gene expression: stimulates transcription of BMAL1, CLOCK and CRY1 by acting as a coactivator for RORA and RORC. Involved in the regulation of ovarian function. Plays a role in renal development. This is Nuclear receptor-interacting protein 1 from Mus musculus (Mouse).